The chain runs to 97 residues: Large ribosomal subunit protein uL23 (97 aa).

The protein belongs to the universal ribosomal protein uL23 family. Part of the 50S ribosomal subunit. Contacts protein L29, and trigger factor when it is bound to the ribosome.

Its function is as follows. One of the early assembly proteins it binds 23S rRNA. One of the proteins that surrounds the polypeptide exit tunnel on the outside of the ribosome. Forms the main docking site for trigger factor binding to the ribosome. The chain is Large ribosomal subunit protein uL23 from Clostridium botulinum (strain ATCC 19397 / Type A).